We begin with the raw amino-acid sequence, 77 residues long: Protein RADIALIS-like 4 (77 aa).

One can recognise an SANT domain in the interval 6-61 (MSTSSWTAREDKQFEMALAKFDKDTPDRWQKIARAVGGKSTEEVKRHYELLLRDVN).

In terms of tissue distribution, expressed just outside the vascular bundles in the rosette stem and the leaf traces. Not detected in floral primordia.

The protein localises to the nucleus. Functionally, probable transcription factor. The chain is Protein RADIALIS-like 4 (RL4) from Arabidopsis thaliana (Mouse-ear cress).